The following is a 199-amino-acid chain: UPF0301 protein Rfer_1377 (199 aa).

The protein belongs to the UPF0301 (AlgH) family.

The protein is UPF0301 protein Rfer_1377 of Albidiferax ferrireducens (strain ATCC BAA-621 / DSM 15236 / T118) (Rhodoferax ferrireducens).